Consider the following 1027-residue polypeptide: Transient-receptor-potential-like protein (1027 aa).

The interval 1–22 is disordered; that stretch reads MTKEGMLSAAGRRFSRCAPSPR. 3 ANK repeats span residues 85–115, 117–141, and 163–192; these read MGRTALEIAVDNENMEVVELLLQQPDIRIGN, LLCAIREGVYRLVEVLVNHPNITRE, and SDISPVILAAQLNQFEILQMLIRKDASIEK. The next 6 helical transmembrane spans lie at 355–375, 391–411, 473–493, 516–536, 559–579, and 640–660; these read FFLYAFLLFLWPIFCLMYILM, FFYYSVSFATFLGLLTWATFE, FLMICLYLCTISIRLSAYYIF, VAEALFAVGNVFSFARIIYLF, FCFIFVLIISSFSIGLAQLYW, and MFIMYHCTSIIVLLNMLIAMM. Disordered regions lie at residues 825 to 929 and 1008 to 1027; these read KRDI…TYTS and ENVKSPSPASHSHVGFNVEK. Acidic residues predominate over residues 855-874; it reads EESEEDDKSDETSSTDEEAD. Basic and acidic residues predominate over residues 910–923; the sequence is RASEADSKLPDRPL. A compositionally biased stretch (polar residues) spans 1008 to 1017; it reads ENVKSPSPAS.

It belongs to the transient receptor (TC 1.A.4) family. STrpC subfamily.

The protein localises to the membrane. Functionally, could mediate calcium entry and form a calcium permeant channel. The protein is Transient-receptor-potential-like protein (trp-1) of Caenorhabditis elegans.